The chain runs to 39 residues: Potassium channel toxin alpha-KTx 2.5 (39 aa).

3 disulfide bridges follow: Cys-7–Cys-29, Cys-13–Cys-34, and Cys-17–Cys-36.

Belongs to the short scorpion toxin superfamily. Potassium channel inhibitor family. Alpha-KTx 02 subfamily. As to expression, expressed by the venom gland.

It localises to the secreted. Functionally, potent selective inhibitor of Kv1.1/KCNA1, Kv1.2/KCNA2, Kv1.3/KCNA3 voltage-gated potassium channels. Weak inhibitor of Kv1.6/KCNA6 potassium channel. It also shows a weak interaction with nicotinic acetylcholine receptors (nAChR), suggesting it may weakly inhibit it. This is Potassium channel toxin alpha-KTx 2.5 from Centruroides limbatus (Bark scorpion).